We begin with the raw amino-acid sequence, 538 residues long: Zinc finger protein 155 (538 aa).

The KRAB domain occupies 8-78 (VTFKDVAVVF…GTATQREGNS (71 aa)). 11 consecutive C2H2-type zinc fingers follow at residues 176 to 198 (YTCD…QRVH), 204 to 226 (FMCD…QRVH), 232 to 254 (FKCE…RKLH), 260 to 282 (YICE…KRIH), 288 to 310 (FKCD…SMVH), 316 to 338 (FRCD…CMVH), 344 to 366 (YRCE…QVVH), 372 to 394 (YNCK…QRVH), 400 to 422 (FKCE…QRSH), 428 to 450 (YKCE…QRVH), and 456 to 478 (YNCK…KRLH). A C2H2-type 12; degenerate zinc finger spans residues 484–506 (FKCEDCGKRLVHRTYRKDQPRDY).

This sequence belongs to the krueppel C2H2-type zinc-finger protein family.

Its subcellular location is the nucleus. In terms of biological role, may be involved in transcriptional regulation. In Homo sapiens (Human), this protein is Zinc finger protein 155 (ZNF155).